The following is a 442-amino-acid chain: D-serine dehydratase (442 aa).

Position 118 is an N6-(pyridoxal phosphate)lysine (Lys118).

It belongs to the serine/threonine dehydratase family. DsdA subfamily. Monomer. Pyridoxal 5'-phosphate is required as a cofactor.

It catalyses the reaction D-serine = pyruvate + NH4(+). This is D-serine dehydratase from Escherichia coli O139:H28 (strain E24377A / ETEC).